The primary structure comprises 326 residues: Glutaminase 2 (326 aa).

7 residues coordinate substrate: Ser-73, Asn-125, Glu-169, Asn-176, Tyr-200, Tyr-252, and Val-270.

The protein belongs to the glutaminase family. Homotetramer.

The catalysed reaction is L-glutamine + H2O = L-glutamate + NH4(+). The sequence is that of Glutaminase 2 from Bacillus cereus (strain ATCC 14579 / DSM 31 / CCUG 7414 / JCM 2152 / NBRC 15305 / NCIMB 9373 / NCTC 2599 / NRRL B-3711).